We begin with the raw amino-acid sequence, 218 residues long: NAD(P)H-hydrate epimerase (218 aa).

The 207-residue stretch at 9-215 folds into the YjeF N-terminal domain; it reads MKKIDQYAID…DIGIPQKAIR (207 aa). Position 55 to 59 (55 to 59) interacts with (6S)-NADPHX; the sequence is NNGAD. Positions 56 and 127 each coordinate K(+). (6S)-NADPHX contacts are provided by residues 131–137 and aspartate 160; that span reads GTGLNRT. Serine 163 serves as a coordination point for K(+).

This sequence belongs to the NnrE/AIBP family. The cofactor is K(+).

It carries out the reaction (6R)-NADHX = (6S)-NADHX. The catalysed reaction is (6R)-NADPHX = (6S)-NADPHX. Catalyzes the epimerization of the S- and R-forms of NAD(P)HX, a damaged form of NAD(P)H that is a result of enzymatic or heat-dependent hydration. This is a prerequisite for the S-specific NAD(P)H-hydrate dehydratase to allow the repair of both epimers of NAD(P)HX. This chain is NAD(P)H-hydrate epimerase, found in Anaerococcus prevotii (strain ATCC 9321 / DSM 20548 / JCM 6508 / NCTC 11806 / PC1) (Peptostreptococcus prevotii).